The primary structure comprises 1976 residues: DNA-directed RNA polymerase V subunit 1 (1976 aa).

Positions 57, 60, 68, 71, 98, and 101 each coordinate Zn(2+). Positions 449, 451, and 453 each coordinate Mg(2+). The interval 751–763 (PYEEMAHSIAARE) is bridging helix. Repeat 1 spans residues 1215 to 1216 (WG). Residues 1215–1693 (WGKRVDVGTG…AKKFPSSGGW (479 aa)) are 18 X 2 AA repeats of [WG]-[GW] repeats. 3 disordered regions span residues 1272 to 1291 (EEEM…LGEP), 1298 to 1718 (DFQN…EDNL), and 1847 to 1976 (FTKP…QTQT). Basic and acidic residues-rich tracts occupy residues 1281 to 1291 (SPERDSALGEP) and 1298 to 1307 (DFQNLHDEGK). Repeat unit 2 spans residues 1329–1330 (WG). The span at 1332-1348 (SKSTGGEANPESNWEKT) shows a compositional bias: polar residues. A compositionally biased stretch (basic and acidic residues) spans 1349–1371 (TNVEKEDAWSSWNTRKDAQESSK). Tandem repeats lie at residues 1378–1379 (WG), 1415–1416 (WG), 1430–1431 (WG), 1439–1440 (WG), 1447–1448 (WG), 1464–1465 (WG), 1498–1499 (WG), 1528–1529 (WG), 1545–1546 (WG), 1562–1563 (WG), 1596–1597 (WG), 1604–1605 (WG), 1621–1622 (WG), 1638–1639 (WG), and 1641–1642 (WG). Residues 1415-1430 (WGHKSVSDKSWDKKNW) show a composition bias toward basic and acidic residues. Positions 1491–1501 (TESNGATWGSS) are enriched in polar residues. Basic and acidic residues predominate over residues 1648-1678 (AEDKDTNEDDRNPWVSLKETKSREKDDKERS). 2 tandem repeats follow at residues 1680-1681 (WG) and 1692-1693 (GW). Residues 1869–1878 (EQSQPPNQSI) show a composition bias toward polar residues. Over residues 1886-1976 (QTQTQSQSPS…SSQSPSQTQT (91 aa)) the composition is skewed to low complexity.

Belongs to the RNA polymerase beta' chain family. Component of the RNA polymerase V complex. Interacts with NRPD4, NRPD2A, and (via C-terminus) with AGO4. Interacts with SUVH2. In terms of tissue distribution, mostly expressed in flowers, and, to a lower extent, in leaves. Present in sperm cells.

It localises to the nucleus. It is found in the nucleolus. It carries out the reaction RNA(n) + a ribonucleoside 5'-triphosphate = RNA(n+1) + diphosphate. DNA-dependent RNA polymerase catalyzes the transcription of DNA into RNA using the four ribonucleoside triphosphates as substrates. Largest and catalytic component of RNA polymerase V involved in RNA-directed DNA methylation-dependent (RdDM) silencing of endogenous repeated sequences, including transposable elements. Also required for full erasure of methylation when the RNA trigger is withdrawn. Seems also involved in the synthesis of short-interfering RNAs (siRNA). Essential component of a self-reinforcing loop coupling de novo DNA methylation to siRNA production. Involved in the maintenance of post-transcriptional RNA silencing. This is DNA-directed RNA polymerase V subunit 1 (NRPE1) from Arabidopsis thaliana (Mouse-ear cress).